Here is a 471-residue protein sequence, read N- to C-terminus: UDP-N-acetylmuramate--L-alanine ligase (471 aa).

114–120 (GTHGKTT) contributes to the ATP binding site.

This sequence belongs to the MurCDEF family.

The protein resides in the cytoplasm. The enzyme catalyses UDP-N-acetyl-alpha-D-muramate + L-alanine + ATP = UDP-N-acetyl-alpha-D-muramoyl-L-alanine + ADP + phosphate + H(+). Its pathway is cell wall biogenesis; peptidoglycan biosynthesis. Cell wall formation. The protein is UDP-N-acetylmuramate--L-alanine ligase of Chlorobaculum parvum (strain DSM 263 / NCIMB 8327) (Chlorobium vibrioforme subsp. thiosulfatophilum).